The primary structure comprises 151 residues: 3-hydroxyacyl-[acyl-carrier-protein] dehydratase FabZ (151 aa).

Histidine 56 is an active-site residue.

The protein belongs to the thioester dehydratase family. FabZ subfamily.

It localises to the cytoplasm. The catalysed reaction is a (3R)-hydroxyacyl-[ACP] = a (2E)-enoyl-[ACP] + H2O. In terms of biological role, involved in unsaturated fatty acids biosynthesis. Catalyzes the dehydration of short chain beta-hydroxyacyl-ACPs and long chain saturated and unsaturated beta-hydroxyacyl-ACPs. The chain is 3-hydroxyacyl-[acyl-carrier-protein] dehydratase FabZ from Nitrobacter hamburgensis (strain DSM 10229 / NCIMB 13809 / X14).